The sequence spans 215 residues: Charged multivesicular body protein 4 (215 aa).

Residues 10 to 173 are a coiled coil; sequence KQDTQETIGK…QEELDAQLLN (164 aa).

The protein belongs to the SNF7 family. As to quaternary structure, probable core component of the endosomal sorting required for transport complex III (ESCRT-III). ESCRT-III components are thought to multimerize to form a flat lattice on the perimeter membrane of the endosome.

It localises to the cytoplasmic vesicle membrane. Its subcellular location is the late endosome membrane. Probable core component of the endosomal sorting required for transport complex III (ESCRT-III) which is involved in multivesicular bodies (MVBs) formation and sorting of endosomal cargo proteins into MVBs. MVBs contain intraluminal vesicles (ILVs) that are generated by invagination and scission from the limiting membrane of the endosome and mostly are delivered to lysosomes enabling degradation of membrane proteins. The protein is Charged multivesicular body protein 4 (chmp4) of Dictyostelium discoideum (Social amoeba).